The chain runs to 741 residues: Cysteine--tRNA ligase, cytoplasmic (741 aa).

Cys-46 provides a ligand contact to Zn(2+). The 'HIGH' region signature appears at 48-58 (PTVYDASHMGH). Ser-297 is modified (phosphoserine). The Zn(2+) site is built by Cys-340, His-365, and Glu-369. The short motif at 398 to 402 (KMSKS) is the 'KMSKS' region element. Residue Lys-401 coordinates ATP.

It belongs to the class-I aminoacyl-tRNA synthetase family. Requires Zn(2+) as cofactor.

The protein resides in the cytoplasm. It catalyses the reaction tRNA(Cys) + L-cysteine + ATP = L-cysteinyl-tRNA(Cys) + AMP + diphosphate. In Drosophila pseudoobscura pseudoobscura (Fruit fly), this protein is Cysteine--tRNA ligase, cytoplasmic (Aats-cys).